A 664-amino-acid polypeptide reads, in one-letter code: Sulfoquinovosidase (664 aa).

5 residues coordinate 3-(6-sulfo-alpha-D-quinovosyl)glycerol: Glu135, Glu270, Arg283, Leu284, and Trp286. Residue Asp388 is the Nucleophile of the active site. Glu391 is a catalytic residue. Arg438 lines the 3-(6-sulfo-alpha-D-quinovosyl)glycerol pocket. Asp455 serves as the catalytic Proton donor. Residue His520 participates in 3-(6-sulfo-alpha-D-quinovosyl)glycerol binding.

The protein belongs to the glycosyl hydrolase 31 family.

It carries out the reaction 3-(6-sulfo-alpha-D-quinovosyl)glycerol + H2O = 6-sulfo-alpha-D-quinovose + glycerol. Part of the sulfoquinovose monooxygenase (sulfo-SMO) pathway, a D-sulfoquinovose degradation pathway that enables the complete utilization of all carbons within sulfoquinovose (SQ) with concomitant production of inorganic sulfite. Catalyzes the first step of the pathway, the hydrolysis of sulfoquinovosyl glycerol (SQGro) to release sulfoquinovose (SQ). Hydrolyzes both epimers of SQGro, with a preference for the natural 2'R isomer. In vitro, can use the substrate analog para-nitrophenyl alpha-sulfoquinovoside (PNPSQ), but shows no detectable activity toward 4-nitrophenyl alpha-D-glucopyranoside (PNPGlc). This Agrobacterium fabrum (strain C58 / ATCC 33970) (Agrobacterium tumefaciens (strain C58)) protein is Sulfoquinovosidase.